The primary structure comprises 323 residues: Cytochrome c biogenesis protein CcsA (323 aa).

A run of 8 helical transmembrane segments spans residues 9–29 (ILTH…LITL), 37–57 (LYVS…GLLV), 71–91 (LYES…FTYF), 100–120 (VSAI…SGFL), 145–165 (MVLG…LIVI), 227–247 (IISL…VWAN), 261–275 (TWAF…IYLH), and 288–308 (AIVA…VNLL).

Belongs to the CcmF/CycK/Ccl1/NrfE/CcsA family. May interact with Ccs1.

Its subcellular location is the plastid. It is found in the chloroplast thylakoid membrane. Its function is as follows. Required during biogenesis of c-type cytochromes (cytochrome c6 and cytochrome f) at the step of heme attachment. This is Cytochrome c biogenesis protein CcsA from Cucumis sativus (Cucumber).